Consider the following 990-residue polypeptide: Presequence protease, mitochondrial (990 aa).

Residues 1 to 25 (MLRLKSLKKPVQAVVRRFATTSAPT) constitute a mitochondrion transit peptide. Histidine 89 contacts Zn(2+). Catalysis depends on glutamate 92, which acts as the Proton acceptor. Histidine 93 contributes to the Zn(2+) binding site. The active site involves glutamate 165. Glutamate 190 contributes to the Zn(2+) binding site.

Belongs to the peptidase M16 family. PreP subfamily. As to quaternary structure, monomer and homodimer; homodimerization is induced by binding of the substrate. The cofactor is Zn(2+).

It is found in the mitochondrion intermembrane space. The protein localises to the mitochondrion matrix. Functionally, degrades mitochondrial transit peptides after their cleavage in the intermembrane space or in the matrix, and presequence peptides; clearance of these peptides is required to keep the presequence processing machinery running. Preferentially cleaves the N-terminal side of paired basic amino acid residues. Also degrades other unstructured peptides. May function as an ATP-dependent peptidase as opposed to a metalloendopeptidase. This is Presequence protease, mitochondrial (CYM1) from Yarrowia lipolytica (strain CLIB 122 / E 150) (Yeast).